The primary structure comprises 473 residues: ATP synthase subunit beta (473 aa).

158–165 contributes to the ATP binding site; that stretch reads GGAGVGKT.

The protein belongs to the ATPase alpha/beta chains family. As to quaternary structure, F-type ATPases have 2 components, CF(1) - the catalytic core - and CF(0) - the membrane proton channel. CF(1) has five subunits: alpha(3), beta(3), gamma(1), delta(1), epsilon(1). CF(0) has three main subunits: a(1), b(2) and c(9-12). The alpha and beta chains form an alternating ring which encloses part of the gamma chain. CF(1) is attached to CF(0) by a central stalk formed by the gamma and epsilon chains, while a peripheral stalk is formed by the delta and b chains.

It is found in the cell membrane. The enzyme catalyses ATP + H2O + 4 H(+)(in) = ADP + phosphate + 5 H(+)(out). Produces ATP from ADP in the presence of a proton gradient across the membrane. The catalytic sites are hosted primarily by the beta subunits. This is ATP synthase subunit beta from Carboxydothermus hydrogenoformans (strain ATCC BAA-161 / DSM 6008 / Z-2901).